The following is a 232-amino-acid chain: Sugar fermentation stimulation protein homolog (232 aa).

The protein belongs to the SfsA family.

The chain is Sugar fermentation stimulation protein homolog from Alkaliphilus metalliredigens (strain QYMF).